A 180-amino-acid chain; its full sequence is Nucleoside-triphosphatase THEP1 (180 aa).

ATP-binding positions include glycine 9 to threonine 16 and valine 99 to glycine 106.

It belongs to the THEP1 NTPase family.

The catalysed reaction is a ribonucleoside 5'-triphosphate + H2O = a ribonucleoside 5'-diphosphate + phosphate + H(+). Has nucleotide phosphatase activity towards ATP, GTP, CTP, TTP and UTP. May hydrolyze nucleoside diphosphates with lower efficiency. In Methanopyrus kandleri (strain AV19 / DSM 6324 / JCM 9639 / NBRC 100938), this protein is Nucleoside-triphosphatase THEP1.